We begin with the raw amino-acid sequence, 197 residues long: Putative WUSCHEL-related homeobox 10 (197 aa).

Positions 75-139 (STRPRWTPTT…NRRARSKRKQ (65 aa)) form a DNA-binding region, homeobox; WUS-type. The interval 132–168 (RARSKRKQPPTTTITSSQADDAAVTTTEERGRCGDDS) is disordered. A compositionally biased stretch (polar residues) spans 140-150 (PPTTTITSSQA).

This sequence belongs to the WUS homeobox family.

Its subcellular location is the nucleus. Its function is as follows. Potential transcription factor that plays a central role during developmental processes. The protein is Putative WUSCHEL-related homeobox 10 (WOX10) of Arabidopsis thaliana (Mouse-ear cress).